Reading from the N-terminus, the 869-residue chain is H(+)/Cl(-) exchange transporter 6 (869 aa).

Residues 1–80 (MAGCRGSLCC…KKGRRYEAVK (80 aa)) lie on the Cytoplasmic side of the membrane. The next 2 membrane-spanning stretches (helical) occupy residues 81 to 113 (WMVV…FGVV) and 128 to 150 (LSLL…LVLI). The Selectivity filter part_1 motif lies at 156 to 160 (GSGIP). Ser-157 lines the chloride pocket. An intramembrane region (helical) is located at residues 159-166 (IPEVKCYL). Transmembrane regions (helical) follow at residues 176 to 194 (RLRT…VAGG) and 200 to 217 (EGPM…LPQF). The short motif at 198-202 (EKEGP) is the Selectivity filter part_2 element. 2 intramembrane regions (helical) span residues 241-253 (FVSA…VAAA) and 257-265 (PIGGTLFSL). 3 helical membrane-spanning segments follow: residues 277-294 (TWKV…LNFF), 335-364 (GFFV…YRMR), and 371-392 (KLVR…VFVA). Residues Asn-410, Asn-422, and Asn-432 are each glycosylated (N-linked (GlcNAc...) asparagine). Transmembrane regions (helical) follow at residues 462–481 (PVTL…WTYG) and 487–511 (GLFV…KSYI). Residues 487–491 (GLFVP) carry the Selectivity filter part_3 motif. Phe-489 is a binding site for chloride. The segment at residues 519-533 (GTFALIGAAAFLGGV) is an intramembrane region (helical). An intramembrane region (note=Loop between two helices) is located at residues 534 to 536 (VRM). Positions 537–548 (TISLTVILIEST) form an intramembrane region, helical. Positions 549 to 552 (NEIT) form an intramembrane region, note=Loop between two helices. The helical transmembrane segment at 553 to 571 (YGLPIMVTLMVAKWTGDFF) threads the bilayer. Residues 572-869 (NKGIYDIHVG…ARLRQHYQTI (298 aa)) are Cytoplasmic-facing. Chloride is bound at residue Tyr-576. A CBS 1 domain is found at 605-662 (MEPNLTYVYPHTRIQSLVSILRTTVHHAFPVVTENRGNEKEFMKGNQLISNNIKFKKS). 630-632 (HHA) contacts ATP. Ser-773 carries the phosphoserine modification. The CBS 2 domain maps to 807–868 (MNPSPFTVSP…QARLRQHYQT (62 aa)). 849 to 852 (TRHN) is an ATP binding site.

This sequence belongs to the chloride channel (TC 2.A.49) family. ClC-6/CLCN6 subfamily. Post-translationally, N-glycosylated on several asparagine residues. As to expression, testis, ovary, small intestine, brain and skeletal muscle. Low level expression in aortic and coronary vascular smooth muscle cells, and aortic endothelial cells. Isoform 3 is only detected in kidney.

Its subcellular location is the late endosome membrane. It carries out the reaction 2 chloride(in) + H(+)(out) = 2 chloride(out) + H(+)(in). In terms of biological role, voltage-gated channel mediating the exchange of chloride ions against protons. Functions as antiporter and contributes to the acidification of the late endosome lumen. The CLC channel family contains both chloride channels and proton-coupled anion transporters that exchange chloride or another anion for protons. The presence of conserved gating glutamate residues is typical for family members that function as antiporters. This Homo sapiens (Human) protein is H(+)/Cl(-) exchange transporter 6.